Here is a 584-residue protein sequence, read N- to C-terminus: MNSKIKKDLKDIISKTIKELALRESIKLEEINIIMQKPPKSELGDLSILIFEFSKILKLNTSIITEEIIKQIGDKYATKAMGPYLNIKFNRKEYIKDTIKKVNEQKEKYGINNVLKNKRIIIEFSSPNTNKPLHIGHLRNDIIGESLSRILKASGAQVTKINLINDRGTHICKSMLAYKKFGNNTTPELSLKKGDHLIGDFYVKYNEYAKNNEMAEDEIQQLLCKWEEGDEKTVQLWKKLNQWAIEGIKATYKLTNITFDKIYLESEIFKIGREIILKGLEEGLCYKREDGAICIDIPTEKNEISEQQFKQKVLLRANGTSIYLTQDLGNIVTRKNEFDFDEMIYVVGSEQIHHFKTLFYVANKLGITKENNLVHLSYGMVNLPEGKMKSREGNVIDADNLIHDLSESIILEIKKRNSDKKDYQEIALNISLGAIHYYLLKTAIHKDILFNKEESLSFTGNSGPYIQYVGARINSILEKYDELNLSNETINFDLLVNENEWEIIKIISEFEEHIIKASKDRNPSVIANYSYLLAKSFSTYYQDTKIIDKNKPELTHARIDLSKAVLQTIKNCMHLLNIPYMKKM.

A 'HIGH' region motif is present at residues 127–137; it reads PNTNKPLHIGH.

This sequence belongs to the class-I aminoacyl-tRNA synthetase family. As to quaternary structure, monomer.

The protein localises to the cytoplasm. The enzyme catalyses tRNA(Arg) + L-arginine + ATP = L-arginyl-tRNA(Arg) + AMP + diphosphate. This Borrelia hermsii (strain HS1 / DAH) protein is Arginine--tRNA ligase.